A 591-amino-acid chain; its full sequence is Aspartate--tRNA ligase (591 aa).

Residue glutamate 173 coordinates L-aspartate. An aspartate region spans residues 197–200; it reads QLFK. Residue arginine 219 coordinates L-aspartate. ATP is bound by residues 219 to 221 and glutamine 228; that span reads RDE. Position 448 (histidine 448) interacts with L-aspartate. Glutamate 482 provides a ligand contact to ATP. Arginine 489 contacts L-aspartate. An ATP-binding site is contributed by 534–537; that stretch reads GLDR.

Belongs to the class-II aminoacyl-tRNA synthetase family. Type 1 subfamily. As to quaternary structure, homodimer.

It localises to the cytoplasm. It carries out the reaction tRNA(Asp) + L-aspartate + ATP = L-aspartyl-tRNA(Asp) + AMP + diphosphate. Functionally, catalyzes the attachment of L-aspartate to tRNA(Asp) in a two-step reaction: L-aspartate is first activated by ATP to form Asp-AMP and then transferred to the acceptor end of tRNA(Asp). The protein is Aspartate--tRNA ligase of Shewanella oneidensis (strain ATCC 700550 / JCM 31522 / CIP 106686 / LMG 19005 / NCIMB 14063 / MR-1).